A 244-amino-acid polypeptide reads, in one-letter code: Tubulin-folding cofactor B (244 aa).

Met1 carries the N-acetylmethionine modification. Ser65 bears the Phosphoserine; by PAK1 mark. Tyr98 is modified (phosphotyrosine). Ser110 carries the phosphoserine modification. Residue Ser128 is modified to Phosphoserine; by PAK1. The 43-residue stretch at 183–225 (GLTDFKPGYWVGVRYDEPLGKNDGSVNGKRYFECQAKYGAFVK) folds into the CAP-Gly domain. At Lys219 the chain carries N6-acetyllysine.

This sequence belongs to the TBCB family. In terms of assembly, supercomplex made of cofactors A to E. Cofactors A and D function by capturing and stabilizing tubulin in a quasi-native conformation. Cofactor E binds to the cofactor D-tubulin complex; interaction with cofactor C then causes the release of tubulin polypeptides that are committed to the native state. Cofactors B and E can form a heterodimer which binds to alpha-tubulin and enhances their ability to dissociate tubulin heterodimers. Interacts with GAN. Interacts with DCTN1. In terms of processing, phosphorylation by PAK1 is required for normal function. Ubiquitinated in the presence of GAN which targets it for degradation by the proteasome. In terms of tissue distribution, widely expressed with highest levels in brain. Broadly distributed throughout the neonate brain but restricted mainly to ependymary cells in the adult brain where it is concentrated in the cilia.

It localises to the cytoplasm. It is found in the cytoskeleton. Its function is as follows. Binds to alpha-tubulin folding intermediates after their interaction with cytosolic chaperonin in the pathway leading from newly synthesized tubulin to properly folded heterodimer. Involved in regulation of tubulin heterodimer dissociation. May function as a negative regulator of axonal growth. The protein is Tubulin-folding cofactor B (Tbcb) of Mus musculus (Mouse).